The chain runs to 77 residues: UPF0291 protein RBAM_017680 (77 aa).

Residues 55–77 (IDPEGNDVTPEKLKREQQKNNLH) form a disordered region. Residues 63–77 (TPEKLKREQQKNNLH) are compositionally biased toward basic and acidic residues.

Belongs to the UPF0291 family.

It is found in the cytoplasm. The protein is UPF0291 protein RBAM_017680 of Bacillus velezensis (strain DSM 23117 / BGSC 10A6 / LMG 26770 / FZB42) (Bacillus amyloliquefaciens subsp. plantarum).